We begin with the raw amino-acid sequence, 68 residues long: Large ribosomal subunit protein bL32 (68 aa).

The segment at 1 to 20 is disordered; it reads MAVQQNKVSKSRRNNRRAHD.

The protein belongs to the bacterial ribosomal protein bL32 family.

The sequence is that of Large ribosomal subunit protein bL32 from Ruegeria sp. (strain TM1040) (Silicibacter sp.).